The chain runs to 293 residues: tRNA pseudouridine synthase B (293 aa).

The active-site Nucleophile is the Asp-40.

It belongs to the pseudouridine synthase TruB family. Type 1 subfamily.

The catalysed reaction is uridine(55) in tRNA = pseudouridine(55) in tRNA. Responsible for synthesis of pseudouridine from uracil-55 in the psi GC loop of transfer RNAs. The polypeptide is tRNA pseudouridine synthase B (Rickettsia akari (strain Hartford)).